The following is a 108-amino-acid chain: Anthranilate 1,2-dioxygenase ferredoxin subunit (108 aa).

In terms of domain architecture, Rieske spans 9–105 (WHPLGAIDEF…IRIVDGQVEV (97 aa)). [2Fe-2S] cluster contacts are provided by C49, H51, C68, and H71.

Belongs to the bacterial ring-hydroxylating dioxygenase ferredoxin component family. Part of a multicomponent enzyme system composed of a reductase (AndAa), a ferredoxin (AndAb) and a two-subunit oxygenase component (AndAc and AndAd). [2Fe-2S] cluster is required as a cofactor.

It functions in the pathway aromatic compound metabolism; anthranilate degradation via hydroxylation; catechol from anthranilate: step 1/1. Part of the multicomponent anthranilate dioxygenase, that converts anthranilate to catechol. This protein seems to be a 2Fe-2S ferredoxin. This is Anthranilate 1,2-dioxygenase ferredoxin subunit from Burkholderia cepacia (Pseudomonas cepacia).